Reading from the N-terminus, the 663-residue chain is ATP-dependent zinc metalloprotease FtsH (663 aa).

Topologically, residues 1–12 (MNKKETNTSWWR) are stromal. Residues 13–33 (IILISLGISIICILAAFLAMK) form a helical membrane-spanning segment. At 34–135 (DGFFVLENNT…HPPKLDIFKT (102 aa)) the chain is on the lumenal side. A helical transmembrane segment spans residues 136–156 (ISDTLGSLIVPGLVVAVFYLF). Topologically, residues 157-663 (LERANNNNNN…KIYESKFPKK (507 aa)) are stromal. A disordered region spans residues 165 to 184 (NNNSNGSPFGPGGGPNQNMR). 244 to 251 (GPPGTGKT) is an ATP binding site. A Zn(2+)-binding site is contributed by His-465. Glu-466 is a catalytic residue. Residues His-469 and Asp-543 each contribute to the Zn(2+) site.

The protein in the central section; belongs to the AAA ATPase family. It in the C-terminal section; belongs to the peptidase M41 family. In terms of assembly, homohexamer. It depends on Zn(2+) as a cofactor.

It is found in the plastid. The protein localises to the chloroplast thylakoid membrane. In terms of biological role, acts as a processive, ATP-dependent zinc metallopeptidase. The chain is ATP-dependent zinc metalloprotease FtsH from Heterosigma akashiwo (strain NIES-293 / 8280G21-1).